The primary structure comprises 284 residues: D-tagatose-1,6-bisphosphate aldolase subunit GatY (284 aa).

Asp82 serves as the catalytic Proton donor. Zn(2+)-binding residues include His83 and His180. Gly181 provides a ligand contact to dihydroxyacetone phosphate. His208 serves as a coordination point for Zn(2+). Residues 209–211 (GAS) and 230–233 (NVAT) each bind dihydroxyacetone phosphate.

It belongs to the class II fructose-bisphosphate aldolase family. TagBP aldolase GatY subfamily. Forms a complex with GatZ. The cofactor is Zn(2+).

It carries out the reaction D-tagatofuranose 1,6-bisphosphate = D-glyceraldehyde 3-phosphate + dihydroxyacetone phosphate. The protein operates within carbohydrate metabolism; D-tagatose 6-phosphate degradation; D-glyceraldehyde 3-phosphate and glycerone phosphate from D-tagatose 6-phosphate: step 2/2. In terms of biological role, catalytic subunit of the tagatose-1,6-bisphosphate aldolase GatYZ, which catalyzes the reversible aldol condensation of dihydroxyacetone phosphate (DHAP or glycerone-phosphate) with glyceraldehyde 3-phosphate (G3P) to produce tagatose 1,6-bisphosphate (TBP). Requires GatZ subunit for full activity and stability. Is involved in the catabolism of galactitol. This Salmonella choleraesuis (strain SC-B67) protein is D-tagatose-1,6-bisphosphate aldolase subunit GatY.